A 764-amino-acid polypeptide reads, in one-letter code: Irregular chiasm C-roughest protein (764 aa).

Positions 1-19 are cleaved as a signal peptide; that stretch reads MLHTMQLLLLATIVGMVRS. Over 20 to 533 the chain is Extracellular; sequence SPYTSYQNQR…QAKKSVSLLM (514 aa). Ig-like C2-type domains are found at residues 21 to 120, 132 to 230, 237 to 343, 346 to 419, and 430 to 530; these read PYTS…PAIR, PEAP…AKIR, PKVK…LDIS, PSFR…AEIS, and PAIG…KSVS. Cystine bridges form between cysteine 49/cysteine 107, cysteine 155/cysteine 214, cysteine 281/cysteine 325, cysteine 367/cysteine 408, and cysteine 450/cysteine 508. Residues asparagine 211, asparagine 313, asparagine 393, asparagine 400, and asparagine 507 are each glycosylated (N-linked (GlcNAc...) asparagine). A helical membrane pass occupies residues 534–556; the sequence is TIVGGISVVAFLLVLTILVVVYI. The Cytoplasmic segment spans residues 557-764; sequence KCKKRTKLPP…SSLLPPPTAV (208 aa). Disordered stretches follow at residues 640-660 and 691-719; these read HQNQLQLQQQQQQSHHQHHTQ and NGLPSLQSTTASVVSSSPNGSCSNQSTTA. Over residues 692–701 the composition is skewed to polar residues; that stretch reads GLPSLQSTTA. The span at 702–719 shows a compositional bias: low complexity; sequence SVVSSSPNGSCSNQSTTA.

As to expression, postembryonic expression is strong in the developing optic lobe and in the eye imaginal disk.

The protein localises to the membrane. Its function is as follows. Required for correct axonal pathway formation in the optic lobe and for programmed cell death in the developing retina. The polypeptide is Irregular chiasm C-roughest protein (rst) (Drosophila melanogaster (Fruit fly)).